The sequence spans 247 residues: Probable transcriptional regulatory protein EUBELI_00902 (247 aa).

Belongs to the TACO1 family.

The protein resides in the cytoplasm. The sequence is that of Probable transcriptional regulatory protein EUBELI_00902 from Lachnospira eligens (strain ATCC 27750 / DSM 3376 / VPI C15-48 / C15-B4) (Eubacterium eligens).